The primary structure comprises 239 residues: tRNA (guanine-N(1)-)-methyltransferase (239 aa).

Residues glycine 108 and 127-132 contribute to the S-adenosyl-L-methionine site; that span reads LGDYVL.

This sequence belongs to the RNA methyltransferase TrmD family. As to quaternary structure, homodimer.

It is found in the cytoplasm. It catalyses the reaction guanosine(37) in tRNA + S-adenosyl-L-methionine = N(1)-methylguanosine(37) in tRNA + S-adenosyl-L-homocysteine + H(+). Its function is as follows. Specifically methylates guanosine-37 in various tRNAs. The protein is tRNA (guanine-N(1)-)-methyltransferase of Streptococcus pneumoniae serotype 2 (strain D39 / NCTC 7466).